The following is a 362-amino-acid chain: Probable dual-specificity RNA methyltransferase RlmN (362 aa).

The active-site Proton acceptor is the glutamate 105. A Radical SAM core domain is found at 111 to 344 (HEYGNSICVT…VTIRREQGHD (234 aa)). A disulfide bridge links cysteine 118 with cysteine 349. Residues cysteine 125, cysteine 129, and cysteine 132 each contribute to the [4Fe-4S] cluster site. S-adenosyl-L-methionine is bound by residues 175-176 (GE), serine 207, 230-232 (SLH), and asparagine 306. Catalysis depends on cysteine 349, which acts as the S-methylcysteine intermediate.

It belongs to the radical SAM superfamily. RlmN family. Requires [4Fe-4S] cluster as cofactor.

It is found in the cytoplasm. It carries out the reaction adenosine(2503) in 23S rRNA + 2 reduced [2Fe-2S]-[ferredoxin] + 2 S-adenosyl-L-methionine = 2-methyladenosine(2503) in 23S rRNA + 5'-deoxyadenosine + L-methionine + 2 oxidized [2Fe-2S]-[ferredoxin] + S-adenosyl-L-homocysteine. It catalyses the reaction adenosine(37) in tRNA + 2 reduced [2Fe-2S]-[ferredoxin] + 2 S-adenosyl-L-methionine = 2-methyladenosine(37) in tRNA + 5'-deoxyadenosine + L-methionine + 2 oxidized [2Fe-2S]-[ferredoxin] + S-adenosyl-L-homocysteine. In terms of biological role, specifically methylates position 2 of adenine 2503 in 23S rRNA and position 2 of adenine 37 in tRNAs. This chain is Probable dual-specificity RNA methyltransferase RlmN, found in Bacillus anthracis (strain CDC 684 / NRRL 3495).